Consider the following 157-residue polypeptide: Protein Smg homolog (157 aa).

Belongs to the Smg family.

This chain is Protein Smg homolog, found in Aliivibrio fischeri (strain MJ11) (Vibrio fischeri).